The chain runs to 291 residues: GCN5-related N-acetyltransferase 4, chloroplastic (291 aa).

A chloroplast-targeting transit peptide spans 1 to 61 (MRSTPLGTTA…PSQINSGACN (61 aa)). The 205-residue stretch at 76-280 (IVVREARLED…RFTFMMKLVN (205 aa)) folds into the N-acetyltransferase domain. Residues 199–201 (VAV) and 207–212 (RKGIAK) each bind acetyl-CoA. Residue Lys217 is modified to N6-acetyllysine. Residues 238-240 (NLG) and Tyr245 contribute to the acetyl-CoA site. The active-site Proton donor is the Tyr245. Residues Lys254 and Lys265 each carry the N6-acetyllysine modification.

This sequence belongs to the acetyltransferase family. GNAT subfamily. Oligomer. In terms of processing, autoacetylated at K-217, K-254 and K-265. Expressed in green tissues.

The protein resides in the plastid. It is found in the chloroplast. It carries out the reaction an N-terminal L-alpha-aminoacyl-[protein] + acetyl-CoA = N-terminal N(alpha)-acetyl-L-alpha-aminoacyl-[protein] + CoA + H(+). It catalyses the reaction L-lysyl-[protein] + acetyl-CoA = N(6)-acetyl-L-lysyl-[protein] + CoA + H(+). The enzyme catalyses N-terminal L-alanyl-[protein] + acetyl-CoA = N-terminal N(alpha)-acetyl-L-alanyl-[protein] + CoA + H(+). The catalysed reaction is N-terminal L-seryl-[protein] + acetyl-CoA = N-terminal N(alpha)-acetyl-L-seryl-[protein] + CoA + H(+). It carries out the reaction N-terminal L-threonyl-[protein] + acetyl-CoA = N-terminal N(alpha)-acetyl-L-threonyl-[protein] + CoA + H(+). It catalyses the reaction N-terminal L-methionyl-[protein] + acetyl-CoA = N-terminal N(alpha)-acetyl-L-methionyl-[protein] + CoA + H(+). The enzyme catalyses N-terminal L-valyl-[protein] + acetyl-CoA = N-terminal N(alpha)-acetyl-L-valyl-[protein] + CoA + H(+). The catalysed reaction is N-terminal glycyl-[protein] + acetyl-CoA = N-terminal N(alpha)-acetylglycyl-[protein] + CoA + H(+). Its function is as follows. Protein acetyltransferase with dual specificity triggering both N-alpha-acetylation (NTA), with a large spectrum of modified N-termini, including methionine, alanine, serine, threonine and to a lower extent glycine and valine as substrates, and epsilon-lysine acetylation (KA) of several plastid proteins. This is GCN5-related N-acetyltransferase 4, chloroplastic from Arabidopsis thaliana (Mouse-ear cress).